The primary structure comprises 377 residues: Nitric oxide reductase FlRd-NAD(+) reductase (377 aa).

This sequence belongs to the FAD-dependent oxidoreductase family. Requires FAD as cofactor.

The protein resides in the cytoplasm. It catalyses the reaction 2 reduced [nitric oxide reductase rubredoxin domain] + NAD(+) + H(+) = 2 oxidized [nitric oxide reductase rubredoxin domain] + NADH. It participates in nitrogen metabolism; nitric oxide reduction. In terms of biological role, one of at least two accessory proteins for anaerobic nitric oxide (NO) reductase. Reduces the rubredoxin moiety of NO reductase. The sequence is that of Nitric oxide reductase FlRd-NAD(+) reductase from Escherichia coli O17:K52:H18 (strain UMN026 / ExPEC).